The following is a 227-amino-acid chain: Probable minor pilin MMP0600 (227 aa).

Positions Met1 to Gly7 are excised as a propeptide. Residues Gln8–Leu16 carry the QXSXEXXXL motif.

In terms of processing, the N-terminus is probably cleaved by the prepilin peptidase EppA, which recognizes the class III signal sequence.

Its subcellular location is the secreted. It localises to the cell surface. The protein resides in the fimbrium. This Methanococcus maripaludis (strain DSM 14266 / JCM 13030 / NBRC 101832 / S2 / LL) protein is Probable minor pilin MMP0600.